We begin with the raw amino-acid sequence, 694 residues long: Nuclear cap-binding protein subunit 3 (694 aa).

Residues 1 to 47 (MAAVRSLRVSVKSDSASDRSESDSESDSDRDAREAEPMEVEEGEVEL) are disordered. Residues 15–36 (SASDRSESDSESDSDRDAREAE) are compositionally biased toward basic and acidic residues. The span at 37 to 47 (PMEVEEGEVEL) shows a compositional bias: acidic residues. The RNA recognition motif (RRM) domain stretch occupies residues 126-187 (EALHMSGVDD…LSRMPDKEEV (62 aa)). The WLDD motif; essential for 7-methylguanosine-containing mRNA cap binding signature appears at 155 to 158 (WIDD). Disordered regions lie at residues 183-277 (DKEE…VKPF), 336-430 (ILKT…MDYD), and 461-694 (LRNS…DSDS). Residues 189–203 (NTDSSKPSELPVQTQ) show a composition bias toward polar residues. The span at 212–235 (DDDDDDDEEEEGEVDDDDDDDEED) shows a compositional bias: acidic residues. Residues 236–264 (EKARDIEDETEKKPQETRETSLSQAERDS) are compositionally biased toward basic and acidic residues. The span at 368–386 (EPIEEEEEEEEDGEEDMDA) shows a compositional bias: acidic residues. Over residues 387–404 (DDRVVEYKDRGEKERGPR) the composition is skewed to basic and acidic residues. Residues 477–496 (IGGGGGGGSGGAVEGRGEGG) show a composition bias toward gly residues. Basic and acidic residues-rich tracts occupy residues 501-517 (TSEKVTDVRQLLEEKRQ), 563-595 (SRREPLSDVRSRLGVAKHDNRSLFSEPPKDKKT), and 605-618 (SHKDSGSGDEDKPS). Residues 634–646 (DSDGVEDEDEEDD) are compositionally biased toward acidic residues. Positions 685–694 (DGSNGSDSDS) are enriched in low complexity.

Belongs to the NCBP3 family. As to quaternary structure, component of an alternative cap-binding complex (CBC) composed of NCBP1/CBP80 and NCBP3.

The protein localises to the nucleus. Its subcellular location is the cytoplasm. Associates with NCBP1/CBP80 to form an alternative cap-binding complex (CBC) which plays a key role in mRNA export. NCBP3 serves as adapter protein linking the capped RNAs (m7GpppG-capped RNA) to NCBP1/CBP80. Unlike the conventional CBC with NCBP2 which binds both small nuclear RNA (snRNA) and messenger (mRNA) and is involved in their export from the nucleus, the alternative CBC with NCBP3 does not bind snRNA and associates only with mRNA thereby playing a role in only mRNA export. This Danio rerio (Zebrafish) protein is Nuclear cap-binding protein subunit 3.